The following is a 717-amino-acid chain: MADPSTYRPAPGTIPDAPGVYRFHDAEGRVIYVGKAKSLRSRLSSYFADLSGLHPRTRQMVTTATGVRWTVVGTEVEALQLEYSWIKEYDPRFNVRYRDDKSYPVLAVTLHEDFPRLYVTRGPRRKGVRYFGPYAHAWAIRETLDMLLRVFPARTCSAGVFKRHSQIGRPCLLGYIGKCSAPCVGRVDADEHRRIVEDFCDFFAGRTDTLIRKLDREMRQASEELEFERAARLRDDLEALRRAMEKQAVVLGDGTDADVIAFADDELAAAVQVFHIRGGRVRGQRGWVIDKVEETGTAALAERFLTQFYGEQAALAEQADAGGTPVPREVLVPELPPECEAITEWLSGLRGGRVAVRVPQRGDKRALMETVERNAKEAFTQYKLRRAGDLTARSAALQELQDALGLDTAPLRIECIDVSHVQGTDVVASLVVFEDGVPRKSEYRRFAVREGAEGGDVGSIAEVVRRRFARYLKETAPPQEGGNGSAGATAAVENGSTDTVAANGSVGTAAGNGSAHTAAGNGLADTAAGEPEADVAVTPQEAERTGIDPETGRPRKFAYPPNLLVIDGGAPQANAAADALTELGITDVAVIGIAKRLEEVWLPDEAEPVILPRTSEALYLLQRVRDAAHDFAIRYHRQKRSKRMKSSTLDSIPGLGEARRTALLKHFGSLRRLRQATVEEISAVPGFGQRTAETVHAALAAGGGTGESRDNAEGESQ.

Positions 16–95 (DAPGVYRFHD…IKEYDPRFNV (80 aa)) constitute a GIY-YIG domain. Residues 208–243 (DTLIRKLDREMRQASEELEFERAARLRDDLEALRRA) enclose the UVR domain. Disordered regions lie at residues 517–555 (TAAGNGLADTAAGEPEADVAVTPQEAERTGIDPETGRPR) and 696–717 (HAALAAGGGTGESRDNAEGESQ). Basic and acidic residues-rich tracts occupy residues 541–553 (EAERTGIDPETGR) and 707–717 (ESRDNAEGESQ).

This sequence belongs to the UvrC family. In terms of assembly, interacts with UvrB in an incision complex.

The protein localises to the cytoplasm. Functionally, the UvrABC repair system catalyzes the recognition and processing of DNA lesions. UvrC both incises the 5' and 3' sides of the lesion. The N-terminal half is responsible for the 3' incision and the C-terminal half is responsible for the 5' incision. This is UvrABC system protein C from Saccharopolyspora erythraea (strain ATCC 11635 / DSM 40517 / JCM 4748 / NBRC 13426 / NCIMB 8594 / NRRL 2338).